The primary structure comprises 565 residues: Proline--tRNA ligase (565 aa).

It belongs to the class-II aminoacyl-tRNA synthetase family. ProS type 1 subfamily. Homodimer.

The protein resides in the cytoplasm. It catalyses the reaction tRNA(Pro) + L-proline + ATP = L-prolyl-tRNA(Pro) + AMP + diphosphate. Functionally, catalyzes the attachment of proline to tRNA(Pro) in a two-step reaction: proline is first activated by ATP to form Pro-AMP and then transferred to the acceptor end of tRNA(Pro). As ProRS can inadvertently accommodate and process non-cognate amino acids such as alanine and cysteine, to avoid such errors it has two additional distinct editing activities against alanine. One activity is designated as 'pretransfer' editing and involves the tRNA(Pro)-independent hydrolysis of activated Ala-AMP. The other activity is designated 'posttransfer' editing and involves deacylation of mischarged Ala-tRNA(Pro). The misacylated Cys-tRNA(Pro) is not edited by ProRS. In Hydrogenobaculum sp. (strain Y04AAS1), this protein is Proline--tRNA ligase.